The sequence spans 244 residues: Acidic leucine-rich nuclear phosphoprotein 32 family member A (244 aa).

LRR repeat units follow at residues 18–41 (DVKELVLDNCRSKEGKIEGLTDEF), 43–64 (GLEFLSTINVCLSSIANLPKLN), 65–87 (KLKKLELSDNNISGGLEVLAEKC), and 89–110 (NLTHLNLSGNRIKDLSTIEPLK). The LRRCT domain maps to 123–161 (CEVTNLNDYRENLFKLLPQLTYLDGYDRDDKEAPDSDAE). Residues 148–244 (YDRDDKEAPD…DQDDEGEDDD (97 aa)) are disordered. Positions 157–227 (DSDAEGYVEG…EEDEGDEEAE (71 aa)) are enriched in acidic residues.

Belongs to the ANP32 family. Phosphorylated on serine residues.

The protein localises to the nucleus. Its subcellular location is the cytoplasm. It localises to the endoplasmic reticulum. Its function is as follows. Implicated in a number of cellular processes, including proliferation, differentiation, caspase-dependent and caspase-independent apoptosis, suppression of transformation (tumor suppressor), inhibition of protein phosphatase 2A, regulation of mRNA trafficking and stability, and inhibition of acetyltransferases as part of the INHAT (inhibitor of histone acetyltransferases) complex. This is Acidic leucine-rich nuclear phosphoprotein 32 family member A (anp32a) from Xenopus laevis (African clawed frog).